Here is a 271-residue protein sequence, read N- to C-terminus: Putative phosphoenolpyruvate synthase regulatory protein (271 aa).

151–158 (GVSRSGKT) contributes to the ADP binding site.

The protein belongs to the pyruvate, phosphate/water dikinase regulatory protein family. PSRP subfamily.

It catalyses the reaction [pyruvate, water dikinase] + ADP = [pyruvate, water dikinase]-phosphate + AMP + H(+). It carries out the reaction [pyruvate, water dikinase]-phosphate + phosphate + H(+) = [pyruvate, water dikinase] + diphosphate. Bifunctional serine/threonine kinase and phosphorylase involved in the regulation of the phosphoenolpyruvate synthase (PEPS) by catalyzing its phosphorylation/dephosphorylation. In Paraburkholderia phytofirmans (strain DSM 17436 / LMG 22146 / PsJN) (Burkholderia phytofirmans), this protein is Putative phosphoenolpyruvate synthase regulatory protein.